A 292-amino-acid polypeptide reads, in one-letter code: Small ribosomal subunit protein uS2 (292 aa).

The segment at R230 to A292 is disordered. 2 stretches are compositionally biased toward basic and acidic residues: residues E247–A259 and P271–A292.

It belongs to the universal ribosomal protein uS2 family.

This is Small ribosomal subunit protein uS2 from Thermobifida fusca (strain YX).